We begin with the raw amino-acid sequence, 152 residues long: Large ribosomal subunit protein bL9 (152 aa).

It belongs to the bacterial ribosomal protein bL9 family.

Binds to the 23S rRNA. This chain is Large ribosomal subunit protein bL9, found in Synechococcus sp. (strain CC9902).